Here is a 173-residue protein sequence, read N- to C-terminus: Large ribosomal subunit protein uL10 (173 aa).

The protein belongs to the universal ribosomal protein uL10 family. Part of the ribosomal stalk of the 50S ribosomal subunit. The N-terminus interacts with L11 and the large rRNA to form the base of the stalk. The C-terminus forms an elongated spine to which L12 dimers bind in a sequential fashion forming a multimeric L10(L12)X complex.

Its function is as follows. Forms part of the ribosomal stalk, playing a central role in the interaction of the ribosome with GTP-bound translation factors. This chain is Large ribosomal subunit protein uL10, found in Oleidesulfovibrio alaskensis (strain ATCC BAA-1058 / DSM 17464 / G20) (Desulfovibrio alaskensis).